We begin with the raw amino-acid sequence, 482 residues long: UDP-N-acetylmuramate--L-alanine ligase (482 aa).

An ATP-binding site is contributed by glycine 129–threonine 135.

It belongs to the MurCDEF family.

The protein resides in the cytoplasm. It carries out the reaction UDP-N-acetyl-alpha-D-muramate + L-alanine + ATP = UDP-N-acetyl-alpha-D-muramoyl-L-alanine + ADP + phosphate + H(+). It functions in the pathway cell wall biogenesis; peptidoglycan biosynthesis. In terms of biological role, cell wall formation. In Acinetobacter baumannii (strain SDF), this protein is UDP-N-acetylmuramate--L-alanine ligase.